A 308-amino-acid polypeptide reads, in one-letter code: Pantothenate synthetase (308 aa).

Residue 39–46 participates in ATP binding; it reads MGALHDGH. His-46 functions as the Proton donor in the catalytic mechanism. (R)-pantoate is bound at residue Gln-71. Beta-alanine is bound at residue Gln-71. 157-160 contacts ATP; that stretch reads GEKD. Residue Gln-163 participates in (R)-pantoate binding. ATP contacts are provided by residues Val-186 and 194 to 197; that span reads MSSR. The segment at 286 to 308 is disordered; sequence IETPAGTAGPDGDRQYAQSPWRN.

This sequence belongs to the pantothenate synthetase family. In terms of assembly, homodimer.

Its subcellular location is the cytoplasm. It carries out the reaction (R)-pantoate + beta-alanine + ATP = (R)-pantothenate + AMP + diphosphate + H(+). It functions in the pathway cofactor biosynthesis; (R)-pantothenate biosynthesis; (R)-pantothenate from (R)-pantoate and beta-alanine: step 1/1. Catalyzes the condensation of pantoate with beta-alanine in an ATP-dependent reaction via a pantoyl-adenylate intermediate. This chain is Pantothenate synthetase, found in Mycolicibacterium paratuberculosis (strain ATCC BAA-968 / K-10) (Mycobacterium paratuberculosis).